The following is a 687-amino-acid chain: Glycine--tRNA ligase beta subunit (687 aa).

It belongs to the class-II aminoacyl-tRNA synthetase family. Tetramer of two alpha and two beta subunits.

It is found in the cytoplasm. The enzyme catalyses tRNA(Gly) + glycine + ATP = glycyl-tRNA(Gly) + AMP + diphosphate. The chain is Glycine--tRNA ligase beta subunit from Lactobacillus helveticus (strain DPC 4571).